Here is a 150-residue protein sequence, read N- to C-terminus: MLLNWQGRHFMEINHSRITSYEIADYMIRTKSLLSAKELAAILEKEYPHLDVDKRDVYLRLKAIAVSKYSSVLIDDSTRPRRFQIHSLNPEFFRRSRAPRRFDEKLQNELYMTQDEKERREHQPWVMARQLFNKVARQHRHYGNATSARI.

Functionally, trans-activating factor involved in the late regulation of the P1 lytic growth cycle. May be the transcriptional activator of all late P1 functions. The polypeptide is Late promoter-activating protein (lpa) (Escherichia phage P1 (Bacteriophage P1)).